Here is a 155-residue protein sequence, read N- to C-terminus: Isotocin-neurophysin IT 1 (155 aa).

Residues 1–19 form the signal peptide; sequence MTGTAISVCLLFLLSVCSA. The cysteines at positions 20 and 25 are disulfide-linked. The residue at position 28 (Gly-28) is a Glycine amide. 7 disulfide bridges follow: Cys-41–Cys-85, Cys-44–Cys-58, Cys-52–Cys-75, Cys-59–Cys-65, Cys-92–Cys-105, Cys-99–Cys-117, and Cys-106–Cys-111.

It belongs to the vasopressin/oxytocin family. Seven disulfide bonds are present in neurophysin.

Functionally, isotocin causes contraction of smooth muscles. In Takifugu rubripes (Japanese pufferfish), this protein is Isotocin-neurophysin IT 1.